Reading from the N-terminus, the 309-residue chain is MEFKHISVLLEETIDSLNIKEDGVYVDCTLGGGGHSKEILKKLSHKGKLIGIDQDTSAIKAAKEKLKDYENIIYVHNNFYNIDSILEELDIDKVDGIIMDLGVSSYQLDEASRGFSYMKDAPLDMRMNREENFSAYNVVNSYEEEELFKILKNYGEEKFSRKIARFIVEKRTENPIETTGELVEIIRKAIPAKFQREGHPAKRTFQAIRIEVNKELQILNKAIEDSVNRLNKDGRLSIITFHSLEDRIVKVKFKELEKPCTCPPSFPICVCGKEPQIKIITKKPIEPSKEEKEINSRSRSAKLRVCRKI.

S-adenosyl-L-methionine contacts are provided by residues 33–35 (GGH), Asp53, Phe79, Asp100, and Gln107.

The protein belongs to the methyltransferase superfamily. RsmH family.

The protein resides in the cytoplasm. The catalysed reaction is cytidine(1402) in 16S rRNA + S-adenosyl-L-methionine = N(4)-methylcytidine(1402) in 16S rRNA + S-adenosyl-L-homocysteine + H(+). Specifically methylates the N4 position of cytidine in position 1402 (C1402) of 16S rRNA. This Clostridium botulinum (strain Langeland / NCTC 10281 / Type F) protein is Ribosomal RNA small subunit methyltransferase H.